Consider the following 70-residue polypeptide: Protein SlyX homolog (70 aa).

It belongs to the SlyX family.

The protein is Protein SlyX homolog of Rhizobium meliloti (strain 1021) (Ensifer meliloti).